We begin with the raw amino-acid sequence, 694 residues long: Putative L-type lectin-domain containing receptor kinase II.2 (694 aa).

The N-terminal stretch at 1-24 is a signal peptide; that stretch reads MAGVLRSLRFWMIICVQVLSLVLA. The Extracellular portion of the chain corresponds to 25–318; that stretch reads QDRDEFVYHD…PTSRSKDSKN (294 aa). The tract at residues 27–272 is legume-lectin like; sequence RDEFVYHDFS…DQYILGWSFK (246 aa). N-linked (GlcNAc...) asparagine glycans are attached at residues Asn57, Asn58, Asn73, Asn131, Asn172, Asn183, Asn201, Asn208, Asn240, and Asn246. The interval 283-314 is disordered; it reads SKILDPPNRPPPPSSPPPPPPPPPTPPTSRSK. Residues 289–309 show a composition bias toward pro residues; sequence PNRPPPPSSPPPPPPPPPTPP. A helical transmembrane segment spans residues 319–339; sequence IIIICVTVTSIAFLLMLGGFL. Residues 340-694 are Cytoplasmic-facing; the sequence is YLYKKKKYAE…EDVTILFGGR (355 aa). The Protein kinase domain occupies 375 to 650; that stretch reads FRENRLLGAG…IQYLEGNATI (276 aa). ATP is bound by residues 381–389 and Lys403; that span reads LGAGGFGKV. Residue Asp500 is the Proton acceptor of the active site.

It in the C-terminal section; belongs to the protein kinase superfamily. Ser/Thr protein kinase family. This sequence in the N-terminal section; belongs to the leguminous lectin family.

It is found in the cell membrane. The enzyme catalyses L-seryl-[protein] + ATP = O-phospho-L-seryl-[protein] + ADP + H(+). It catalyses the reaction L-threonyl-[protein] + ATP = O-phospho-L-threonyl-[protein] + ADP + H(+). The polypeptide is Putative L-type lectin-domain containing receptor kinase II.2 (LECRK22) (Arabidopsis thaliana (Mouse-ear cress)).